We begin with the raw amino-acid sequence, 475 residues long: Tubulin gamma chain (475 aa).

142 to 148 (AGGTGSG) serves as a coordination point for GTP. Residues 455-475 (GKQVSGEGNTSGTVDSRVGAS) are disordered.

Belongs to the tubulin family.

It is found in the cytoplasm. Its subcellular location is the cytoskeleton. The protein resides in the microtubule organizing center. In terms of biological role, tubulin is the major constituent of microtubules. The gamma chain is found at microtubule organizing centers (MTOC) such as the spindle poles, suggesting that it is involved in the minus-end nucleation of microtubule assembly. This chain is Tubulin gamma chain (TUBG1), found in Physcomitrium patens (Spreading-leaved earth moss).